The chain runs to 456 residues: MSRLIINKSNSRICNTIVKNYLIQTKYTLQQQQHQQQQQQQQYVRSYCSLQQPKPSKPNMIEIVTHFFDKVKNKSFIIENYLNNPIPEQQQQLNKNIKINNTDKDNDTLEQIQLLDPLNNLGKRKGNEIFKVVENDLSNMTHNIMKTITDGVSANSTYSPSPSKKTHPILSSISSYYFELKGKRIRPTIVLLLSKALSSTVHGSQLKLAEIVEMIHTASLVHDDVIDEASTRRDVISINHSYTNKLAILCGDYLLARASVVLSTIRNPDVTECMSTALAELVEGEFMQAKSNGVVSFDNYLQKTYLKTGSLITNSCRSAAILSGADSNIINISTEFGKNLGLAFQIVDDLLDYTGSAEECGKATSVDLTLGLATAPVLYATQEFPQLEKLIKRKFSEIGDVEEAKRLVALSKGIEKTRNLAIEYCNRAIQSLLKLPQSESRDLLITLSHIVVTRTK.

Residues K183, R186, and H216 each contribute to the isopentenyl diphosphate site. The Mg(2+) site is built by D223 and D227. An isopentenyl diphosphate-binding site is contributed by R233.

The protein belongs to the FPP/GGPP synthase family. It depends on Mg(2+) as a cofactor.

The protein resides in the mitochondrion. The catalysed reaction is 7 isopentenyl diphosphate + (2E,6E)-farnesyl diphosphate = all-trans-decaprenyl diphosphate + 7 diphosphate. It functions in the pathway cofactor biosynthesis; ubiquinone biosynthesis. In terms of biological role, supplies decaprenyl diphosphate, the precursor for the side chain of the isoprenoid quinones ubiquinone-10. The polypeptide is Decaprenyl-diphosphate synthase (coq1) (Dictyostelium discoideum (Social amoeba)).